A 168-amino-acid chain; its full sequence is Small ribosomal subunit protein uS5c (168 aa).

One can recognise an S5 DRBM domain in the interval 17 to 80 (WSERVIQITR…SDCKKQIIEF (64 aa)).

The protein belongs to the universal ribosomal protein uS5 family. As to quaternary structure, part of the 30S ribosomal subunit. Contacts protein S4.

It is found in the plastid. The protein resides in the chloroplast. In terms of biological role, with S4 and S12 plays an important role in translational accuracy. The polypeptide is Small ribosomal subunit protein uS5c (rps5) (Cyanidium caldarium (Red alga)).